We begin with the raw amino-acid sequence, 397 residues long: Sporulation-specific protein 20 (397 aa).

The disordered stretch occupies residues 1 to 26 (MGFRKILASKSHHSRHHNQHHKNLKL). Residues 4–50 (RKILASKSHHSRHHNQHHKNLKLQNHRYVLISNITGSHETKYLSPFR) form an inhibitory region region. The segment covering 10 to 26 (KSHHSRHHNQHHKNLKL) has biased composition (basic residues). Residues 51–95 (MDNCSGSRRRDRLHVKLKSLRNKIHKQLHPNCRFDDATKTSDDKC) form a positive regulatory region region. The region spanning 330–392 (NQMEIDLYGN…QAKRYRLEKV (63 aa)) is the t-SNARE coiled-coil homology domain.

It belongs to the SNAP-25 family. Interacts with the t-SNARE SSO1 and the v-SNARE SNC2.

Its subcellular location is the cell membrane. It is found in the prospore membrane. Required to maintain the prospore membrane to the nucleus during sporulation in order to capture the daughter nuclei and form the spores. Mediates the fusion of exocytic vesicles with the plasma membrane during sporulation through its interactions with the t-SNARE SSO1 and v-SNARE SNC2. The protein is Sporulation-specific protein 20 (SPO20) of Saccharomyces cerevisiae (strain ATCC 204508 / S288c) (Baker's yeast).